The following is a 1910-amino-acid chain: C2 domain-containing protein (1910 aa).

The segment covering 1 to 28 (MMKLKEMVEAAEAKVESKPPQAAEEKAP) has biased composition (basic and acidic residues). Disordered stretches follow at residues 1–54 (MMKL…EPLD), 355–377 (AMKLPNRGTRSPSGLESNRPEDG), and 398–428 (LEELPASLRPPLSKRRKGEDKKDGNKADGPQ). Residues 414–423 (KGEDKKDGNK) are compositionally biased toward basic and acidic residues. A C2 domain is found at 557–678 (QLGEVSESDS…FFNEKHNKRN (122 aa)). 2 stretches are compositionally biased toward basic and acidic residues: residues 1192 to 1205 (LAQKEKQSREDAQR) and 1215 to 1228 (GHEGADNGAEDKQG). Disordered stretches follow at residues 1192–1267 (LAQK…VKKG), 1405–1424 (ATAGEGEQQTSEGIPTRDMQ), 1431–1654 (LEEA…SMGA), 1666–1747 (QRKH…FLSS), 1822–1841 (AKEEKDLIARQPPPARDWSD), and 1879–1910 (DACSRRAESSNESRTTAGAKLRQQQLDLAGRT). Low complexity-rich tracts occupy residues 1239 to 1257 (AAAAAVAEESVSAEAVQGA) and 1405 to 1414 (ATAGEGEQQT). Over residues 1440 to 1469 (KKKKKKEKKEKKEKKEKKEKKEKKEKKKKK) the composition is skewed to basic residues. Residues 1492 to 1502 (PAAAIPSVLLP) are compositionally biased toward low complexity. Over residues 1517 to 1526 (KKEKKEKKKK) the composition is skewed to basic residues. Residues 1550-1561 (PAAAIPSILLPA) show a composition bias toward low complexity. Over residues 1569–1584 (EKPKEKKTEKKKEKHT) the composition is skewed to basic and acidic residues. The span at 1595–1604 (LPESETTAVV) shows a compositional bias: polar residues. 2 stretches are compositionally biased toward low complexity: residues 1620–1629 (VPSSIASSEA) and 1675–1698 (SSSSSSEVSASSASSLSPSSSSSS). Residues 1701 to 1711 (AETRAKADALR) are compositionally biased toward basic and acidic residues. 2 stretches are compositionally biased toward low complexity: residues 1712–1722 (ARLQAAQARLA) and 1729–1747 (VSSSETESSETSEASFLSS). A coiled-coil region spans residues 1766 to 1828 (QQRLQKMVSG…TRRAKEEKDL (63 aa)). Polar residues predominate over residues 1890–1904 (ESRTTAGAKLRQQQL).

It localises to the membrane. Regulates microneme secretion. Probably involved in regulation of rhoptry and dense granule secretion. The sequence is that of C2 domain-containing protein from Toxoplasma gondii.